The sequence spans 185 residues: Ion-translocating oxidoreductase complex subunit B (185 aa).

The hydrophobic stretch occupies residues 1 to 26 (MNHILLIILIFAALALIFGLLLGFAA). The region spanning 32–90 (ESDPIVDQLDALLPQTQCGQCGYPGCRPYAEAIANGDSINKCVPGGAQTIQNIADLMGV) is the 4Fe-4S domain. 12 residues coordinate [4Fe-4S] cluster: Cys-49, Cys-52, Cys-57, Cys-73, Cys-115, Cys-118, Cys-121, Cys-125, Cys-145, Cys-148, Cys-151, and Cys-155. 4Fe-4S ferredoxin-type domains are found at residues 106–135 (RVAF…GAPK) and 136–165 (LMHT…MIEL).

It belongs to the 4Fe4S bacterial-type ferredoxin family. RnfB subfamily. As to quaternary structure, the complex is composed of six subunits: RnfA, RnfB, RnfC, RnfD, RnfE and RnfG. Requires [4Fe-4S] cluster as cofactor.

It is found in the cell inner membrane. Part of a membrane-bound complex that couples electron transfer with translocation of ions across the membrane. In Tolumonas auensis (strain DSM 9187 / NBRC 110442 / TA 4), this protein is Ion-translocating oxidoreductase complex subunit B.